The sequence spans 402 residues: Pentalenic acid synthase (402 aa).

Residues 1–28 (MTEPGTSVSAPVAFPQDRTCPYDPPTAY) are disordered. Position 351 (C351) interacts with heme.

This sequence belongs to the cytochrome P450 family. It depends on heme as a cofactor.

The enzyme catalyses 1-deoxypentalenate + reduced 2[4Fe-4S]-[ferredoxin] + O2 + 2 H(+) = pentalenate + oxidized 2[4Fe-4S]-[ferredoxin] + H2O. Its pathway is antibiotic biosynthesis; neopentalenolactone biosynthesis. Its function is as follows. Catalyzes the conversion of 1-deoxypentalenic acid to pentalenic acid in the biosynthesis of neopentalenolactone antibiotic. This is Pentalenic acid synthase (cyp28) from Streptomyces avermitilis (strain ATCC 31267 / DSM 46492 / JCM 5070 / NBRC 14893 / NCIMB 12804 / NRRL 8165 / MA-4680).